Consider the following 930-residue polypeptide: F-box only protein 11 (930 aa).

A disordered region spans residues 1 to 150 (MNSVRAANRR…RVSGKSQDLS (150 aa)). The span at 7–16 (ANRRPRRVSR) shows a compositional bias: basic residues. Residues 17 to 27 (PRPVQQQQQQP) are compositionally biased toward low complexity. The segment covering 28-73 (PQQPPPQPPQQQPPPQPPQQPPQQQPPPPPQQQPPPPPPPPPPPPQ) has biased composition (pro residues). The span at 117-132 (PTKSSMEGASTSTTEN) shows a compositional bias: polar residues. An F-box domain is found at 156–202 (QYLQEKLPDEVVLKIFSYLLEQDLCRAACVCKRFSELANDPILWKRL). PbH1 repeat units follow at residues 398–420 (GACP…YITD), 421–443 (HAQG…WVKN), 444–466 (HGNP…FTFD), 467–489 (HGMG…EVKA), 490–512 (YANP…YVHE), 513–535 (KGRG…WITS), 536–558 (NSDP…YIFG), 559–581 (DGRG…QIRT), 582–604 (NSCP…YVHE), 605–627 (KGQG…WVTT), 628–650 (GSTP…YFYD), 651–673 (NGHG…QIRT), 674–696 (GSNP…LVYN), 697–719 (SGLG…WIKT), 720–742 (DSNP…CIFN), 743–765 (GGRG…LIST), 766–788 (NSHP…EITN), 789–811 (HATA…FLAS), and 812–833 (GVNV…EKAV). The UBR-type zinc finger occupies 836 to 907 (GQCLYKISSY…LSNPCTLAGE (72 aa)).

As to quaternary structure, component of the SCF(FBXO11) complex consisting of CUL1, RBX1, SKP1 and FBXO11. Interacts with CIITA. At 9.5 dpc and 10.5 dpc, expression is restricted to developing heart tissue. By 11.5 dpc and 12.5 dpc, detected in liver and subsequently in muscle by 13.5 dpc. At 14.5 dpc, still detected in heart, liver and muscle and also in the developing secondary palate including the nasal, medial and oral epithelia of the palatal shelves. At 15.5 dpc and 16.5 dpc, expressed in lung, kidney, heart, liver, muscle and adrenal gland. At this time, fusion of the palate shelves has occurred, with expression confined to the nasal and oral epithelia. At 17.5 dpc, expression in the lung is confined to bronchial epithelial cells and is evident in bone marrow, skin, tissue macrophages, osteoblasts, kidney, liver and spleen. At 18.5 dpc, expressed in bone marrow, liver, kidney and muscle but decreases in heart and lung. At this time, first detected in the middle ear epithelium. At the newborn stage, expression is strong in the middle ear where it is confined to mucin-secreting cells, as well as persisting in bone marrow, kidney and liver. Middle ear expression persists in postnatal head tissue at 4 and 13 days after birth and has declined by 21 days after birth. In the adult, expression is seen in alveolar macrophages of the lung, glomeruli and collecting tubules of the kidney, midbrain, heart and muscle.

It localises to the nucleus. It is found in the chromosome. The protein operates within protein modification; protein ubiquitination. In terms of biological role, substrate recognition component of a SCF (SKP1-CUL1-F-box protein) E3 ubiquitin-protein ligase complex which mediates the ubiquitination and subsequent proteasomal degradation of target proteins, such as DTL/CDT2, BCL6, SNAI1 and PRDM1/BLIMP1. The SCF(FBXO11) complex mediates ubiquitination and degradation of BCL6, thereby playing a role in the germinal center B-cells terminal differentiation toward memory B-cells and plasma cells. The SCF(FBXO11) complex also mediates ubiquitination and degradation of DTL, an important step for the regulation of TGF-beta signaling, cell migration and the timing of the cell-cycle progression and exit. The SCF(FBXO11) complex also catalyzes ubiquitination and degradation of GSK3B-phosphorylated SNAI1. Binds to and neddylates phosphorylated p53/TP53, inhibiting its transcriptional activity. Plays a role in the regulatiom of erythropoiesis but not myelopoiesis or megakaryopoiesis. Mechanistically, activates erythroid genes by mediating the degradation of BAHD1, a heterochromatin-associated protein that recruits corepressors to H3K27me3 marks. Participates in macrophage cell death and inflammation in response to bacterial toxins by regulating the expression of complement 5a receptor 1/C5AR1 and IL-1beta. Acts as a critical regulator to determine the level of MHC-II by mediating the recognition of degron at the P/S/T domain of CIITA leading to its ubiquitination and subsequent degradation via the proteasome. Participates in the antiviral repsonse by initiating the activation of TBK1-IRF3-IFN-I axis. Mediates the 'Lys-63'-linked ubiquitination of TRAF3 to strengthen the interaction between TRAF3 and TBK1. The chain is F-box only protein 11 from Mus musculus (Mouse).